Consider the following 239-residue polypeptide: uncharacterized protein (239 aa).

6 consecutive transmembrane segments (helical) span residues 30–50 (VALL…IELI), 76–96 (LYLG…IFII), 107–127 (LIPI…FGYI), 157–177 (FIIL…FQIL), 188–208 (MMLS…AIIT), and 214–234 (LIQL…ILVL).

Belongs to the TatC family.

The protein resides in the plastid. It is found in the chloroplast membrane. This is an uncharacterized protein from Cyanidium caldarium (Red alga).